The sequence spans 119 residues: Large ribosomal subunit protein uL18 (119 aa).

This sequence belongs to the universal ribosomal protein uL18 family. Part of the 50S ribosomal subunit; part of the 5S rRNA/L5/L18/L25 subcomplex. Contacts the 5S and 23S rRNAs.

Functionally, this is one of the proteins that bind and probably mediate the attachment of the 5S RNA into the large ribosomal subunit, where it forms part of the central protuberance. The sequence is that of Large ribosomal subunit protein uL18 from Nitrosomonas europaea (strain ATCC 19718 / CIP 103999 / KCTC 2705 / NBRC 14298).